The following is a 60-amino-acid chain: Metallothionein (60 aa).

Positions 1–28 are beta; the sequence is MDPCDCAKTGTCNCGTSCTCANCSCTKC. A divalent metal cation is bound by residues C4, C6, C12, C14, C18, C20, C23, C25, C28, C32, C33, C35, C36, C40, C43, C47, C49, C54, C58, and C59. Residues 29–60 form an alpha region; it reads KKSCCECCPSGCSKCASGCACKDKTCDTNCCQ.

It belongs to the metallothionein superfamily. Type 1 family.

Metallothioneins have a high content of cysteine residues that bind various heavy metals. In Gadus morhua (Atlantic cod), this protein is Metallothionein (mt).